The primary structure comprises 267 residues: 5'-nucleotidase SurE (267 aa).

Asp-14, Asp-15, Ser-45, and Asn-100 together coordinate a divalent metal cation.

The protein belongs to the SurE nucleotidase family. A divalent metal cation is required as a cofactor.

The protein resides in the cytoplasm. The enzyme catalyses a ribonucleoside 5'-phosphate + H2O = a ribonucleoside + phosphate. Functionally, nucleotidase that shows phosphatase activity on nucleoside 5'-monophosphates. The polypeptide is 5'-nucleotidase SurE (Methanosarcina mazei (strain ATCC BAA-159 / DSM 3647 / Goe1 / Go1 / JCM 11833 / OCM 88) (Methanosarcina frisia)).